The chain runs to 97 residues: Na(+)/H(+) antiporter subunit F1 (97 aa).

The next 3 membrane-spanning stretches (helical) occupy residues 3–23, 35–55, and 60–80; these read FKIF…AMLI, VVAL…FSIL, and YMLV…AVFS.

The protein belongs to the CPA3 antiporters (TC 2.A.63) subunit F family. In terms of assembly, may form a heterooligomeric complex that consists of seven subunits: mnhA1, mnhB1, mnhC1, mnhD1, mnhE1, mnhF1 and mnhG1.

It is found in the cell membrane. In terms of biological role, mnh complex is a Na(+)/H(+) antiporter involved in Na(+) excretion. This is Na(+)/H(+) antiporter subunit F1 (mnhF1) from Staphylococcus epidermidis (strain ATCC 35984 / DSM 28319 / BCRC 17069 / CCUG 31568 / BM 3577 / RP62A).